Here is a 477-residue protein sequence, read N- to C-terminus: SH3 domain-binding protein 5 homolog (477 aa).

Residues glutamine 12 to glutamate 95 adopt a coiled-coil conformation. Phosphoserine occurs at positions 113 and 115. The stretch at asparagine 122 to arginine 221 forms a coiled coil. 2 disordered regions span residues glutamate 224 to serine 258 and glycine 276 to alanine 306. Acidic residues predominate over residues glutamate 291–glycine 305.

This sequence belongs to the SH3BP5 family.

The sequence is that of SH3 domain-binding protein 5 homolog (pcs) from Drosophila melanogaster (Fruit fly).